The following is a 495-amino-acid chain: MAARRGKSTRTASEVGAAGPRASARSVNGAPTVPEAARPGARRNGPSRASGCRREKSGPDPREKPQVRTRTARAEDQAEGPSAPSERVEPPSAQGASLLRAGSCRAREARSARELRPQAGATELAAPARMEAPPGAWKLQTVLEKVRLSRHEISEAAEVVNWVVEHLLRRLQGGESEFKGVALLRTGSYYERVKISAPNEFDVMFKLEVPRIQLEEYCNSGAHYFVKFKRNPGGNPLEQFLEKEILSASKMLSKFRKIIKEEIKNIEGVTVERKRRGSPAVTLLISKPKEISVDIILALESKSSWPASTQKGLPISQWLGAKVKNNLKRQPFYLVPKHAKEGSGFQEETWRLSFSHIEKDILKNHGQSKTCCEIDGVKCCRKECLKLMKYLLEQLKKKFGNRRELAKFCSYHVKTAFFHVCTQDPHDNQWHLKNLECCFDNCVAYFLQCLKTEQLANYFIPGVNLFSRDLIDKPSKEFLSKQIEYERNNGFPVFW.

The tract at residues 1–128 (MAARRGKSTR…AGATELAAPA (128 aa)) is disordered. The DNA-binding stretch occupies residues 1-134 (MAARRGKSTR…AAPARMEAPP (134 aa)). An N6-acetyllysine modification is found at K7. Position 13 is a phosphoserine (S13). Composition is skewed to basic and acidic residues over residues 52–76 (CRRE…RAED) and 105–116 (RAREARSARELR). The residue at position 56 (K56) is an N6-acetyllysine. S57 carries the phosphoserine modification. The interval 57–68 (SGPDPREKPQVR) is required for association with the cell membrane. The segment at 103 to 134 (SCRAREARSARELRPQAGATELAAPARMEAPP) is required for activation upon DNA viral infection. Positions 143 to 148 (LEKVRL) match the Nuclear export signal motif. K145 carries the post-translational modification N6-lactoyllysine. Residues 147–190 (RLSRHEISEAAEVVNWVVEHLLRRLQGGESEFKGVALLRTGSYY) are DNA-binding. E165 bears the PolyADP-ribosyl glutamic acid mark. T186 serves as a coordination point for GTP. S188 carries the post-translational modification Phosphoserine. Residue S188 participates in ATP binding. A Phosphotyrosine modification is found at Y190. Residues E200 and D202 each coordinate Mg(2+). D202 provides a ligand contact to 2',3'-cGAMP. K206 is covalently cross-linked (Glycyl lysine isopeptide (Lys-Gly) (interchain with G-Cter in SUMO)). A Glycyl lysine isopeptide (Lys-Gly) (interchain with G-Cter in ubiquitin) cross-link involves residue K260. The residue at position 261 (E261) is a 5-glutamyl polyglutamate. The Nuclear localization signal signature appears at 268-278 (GVTVERKRRGS). At S278 the chain carries Phosphoserine. D294 is a binding site for GTP. Residue D294 coordinates Mg(2+). Position 294 (D294) interacts with 2',3'-cGAMP. The interval 316-357 (SQWLGAKVKNNLKRQPFYLVPKHAKEGSGFQEETWRLSFSHI) is interaction with collided ribosomes. A Glycyl lysine isopeptide (Lys-Gly) (interchain with G-Cter in SUMO); alternate cross-link involves residue K322. Residue K322 forms a Glycyl lysine isopeptide (Lys-Gly) (interchain with G-Cter in ubiquitin); alternate linkage. 2',3'-cGAMP is bound by residues K337 and R351. Position 351-358 (351-358 (RLSFSHIE)) interacts with GTP. E358 serves as a coordination point for ATP. K359 bears the N6-acetyllysine mark. Residue K359 forms a Glycyl lysine isopeptide (Lys-Gly) (interchain with G-Cter in SUMO); alternate linkage. Residue K359 forms a Glycyl lysine isopeptide (Lys-Gly) (interchain with G-Cter in ubiquitin); alternate linkage. Residues 359 to 382 (KDILKNHGQSKTCCEIDGVKCCRK) form a DNA-binding region. H365 is a binding site for Zn(2+). K369 bears the N6-acetyllysine mark. K369 is covalently cross-linked (Glycyl lysine isopeptide (Lys-Gly) (interchain with G-Cter in SUMO)). Positions 371, 372, and 379 each coordinate Zn(2+). 2 S-palmitoyl cysteine lipidation sites follow: C379 and C380. Glycyl lysine isopeptide (Lys-Gly) (interchain with G-Cter in ubiquitin) cross-links involve residues K386, K389, K396, and K397. An N6-acetyllysine modification is found at K389. Position 389 (K389) interacts with ATP. S410 is modified (phosphoserine). Residue 410 to 414 (SYHVK) coordinates ATP. C449 carries S-palmitoyl cysteine lipidation. An N6-methyllysine modification is found at K481.

Belongs to the mab-21 family. In terms of assembly, monomer in the absence of DNA. Homodimer in presence of dsDNA: forms a 2:2 dimer with two enzymes binding to two DNA molecules. Interacts with nucleosomes; interaction is mainly mediated via histones H2A and H2B and inactivates the nucleotidyltransferase activity by blocking DNA-binding and subsequent activation. Interacts with PQBP1 (via WW domain). Interacts with TRIM14; this interaction recruits USP14, leading to deubiquitinate and stabilize CGAS and promote type I interferon production. Interacts with ZCCHC3; promoting sensing of dsDNA by CGAS. Interacts (when not monomethylated) with (poly-ADP-ribosylated) PARP1; interaction takes place in the nucleus and prevents the formation of the PARP1-TIMELESS complex. Interacts (when monomethylated) with SGF29; interaction with SGF29 prevents interaction with PARP1. Interacts with PCBP2; preventing the formation of liquid-like droplets in which CGAS is activated. Interacts with IRGM; promoting CGAS degradation. The cofactor is Mg(2+). Mn(2+) serves as cofactor. Requires Zn(2+) as cofactor. In terms of processing, the N-terminal disordered part (1-134) is phosphorylated by AURKB during the G2-M transition, blocking CGAS liquid phase separation and preventing activation. Phosphorylation at Tyr-190 by BLK promotes cytosolic retention. Localizes into the nucleus following dephosphorylation at Tyr-190. Phosphorylation at Ser-410 activates the nucleotidyltransferase activity. Dephosphorylation at Ser-410 by PPP6C impairs its ability to bind GTP, thereby inactivating it. Phosphorylation at Ser-188 by PRKDC inhibits its cyclic GMP-AMP synthase activity by impairing homodimerization and activation. Phosphorylation at Ser-278 by AKT (AKT1, AKT2 or AKT3) suppresses the nucleotidyltransferase activity. Phosphorylation at Ser-278 by CDK1 during mitosis leads to its inhibition, thereby preventing CGAS activation by self-DNA during mitosis. Dephosphorylated at Ser-278 by protein phosphatase PP1 upon mitotic exit. Post-translationally, ubiquitinated at Lys-389 via 'Lys-48'-linked polyubiquitin chains, leading to its SQSTM1-mediated autophagic degradation. Interaction with TRIM14 promotes recruitment of USP14, leading to deubiquitinate Lys-389 and stabilize CGAS. Ubiquitinated at Lys-359 by RNF185 via 'Lys-27'-linked polyubiquitination, promoting CGAS cyclic GMP-AMP synthase activity. Monoubiquitination at Lys-322 by TRIM56 promotes oligomerization and subsequent activation. Monoubiquitination by TRIM41 promotes CGAS activation. Ubiquitination at Lys-260 via 'Lys-48'-linked polyubiquitination promotes its degradation. Deubiquitination at Lys-260 by USP29 promotes its stabilization. Deubiquitinated by USP27X, promoting its stabilization. Ubiquitinated at Lys-386 via 'Lys-63'-linked polyubiquitin chains by MARCHF8, leading to the inhibition of its DNA binding ability. In cycling cells, nucleosome-bound CGAS is ubiquitinated at Lys-396 and Lys-397 via 'Lys-48'-linked polyubiquitin chains by the ECS(SPSB3) complex, leading to its degradation: ubiquitination and degradation of nuclear CGAS during G1 and G2 phases is required to promote low intranuclear CGAS abundance before the next mitotic cycle. Sumoylated at Lys-206 by TRIM38 in uninfected cells and during the early phase of viral infection, promoting its stability by preventing ubiquitination at Lys-260 and subsequent degradation. Desumoylated by SENP2 during the late phase of viral infection. Sumoylation at Lys-322, Lys-359 and Lys-369 prevents DNA-binding, oligomerization and nucleotidyltransferase activity. Desumoylation at Lys-322, Lys-359 and Lys-369 by SENP7 relieves inhibition and activates CGAS. In terms of processing, polyglutamylated by TTLL6 at Glu-261, leading to impair DNA-binding activity. Deglutamylated by AGBL5/CCP5 and AGBL6/CCP6. Post-translationally, acetylation at Lys-359, Lys-369 and Lys-389 inhibits the cyclic GMP-AMP synthase activity. Deacetylated upon cytosolic DNA challenge such as viral infections. Acetylation by KAT5 increases the cyclic GMP-AMP synthase activity by promoting DNA-binding and subsequent activation. Proteolytically cleaved by apoptotic caspases during apoptosis, leading to its inactivation. The damage of the nucleus and the mitochondria during apoptosis leads to leakage of nuclear and mitochondrial DNA, which activate CGAS: cleavage and inactivation during apoptosis in required to prevent cytokine overproduction. Cleaved by CASP7 and CASP3 during virus-induced apoptosis, thereby inactivating it and preventing cytokine overproduction. Cleaved by CASP1 upon DNA virus infection; the cleavage impairs cGAMP production. Also cleaved by the pyroptotic CASP4 during non-canonical inflammasome activation; does not cut at the same sites than CASP1. In terms of processing, degraded via selective autophagy following interaction with IRGM. IRGM promotes CGAS recruitment to autophagosome membranes, promoting its SQSTM1/p62-dependent autophagic degradation. Post-translationally, poly-ADP-ribosylation at Glu-165 by PARP1 impairs DNA-binding, thereby preventing the cyclic GMP-AMP synthase activity. Palmitoylation at Cys-449 by ZDHHC18 impairs DNA-binding, thereby preventing the cyclic GMP-AMP synthase activity. Palmitoylation at Cys-379 and Cys-380 by ZDHHC9 promotes homodimerization and cyclic GMP-AMP synthase activity. Depalmitoylation at Cys-379 and Cys-380 by LYPLAL1 impairs homodimerization and cyclic GMP-AMP synthase activity. In terms of processing, monomethylated at Lys-481 by SETD7. Monomethylation promotes interaction with SGF29, preventing interaction between PARP1 nad SGF29. Demethylation by RIOX1 promotes interaction with PARP1, followed by PARP1 inactivation. Post-translationally, lactylation by AARS2 prevents ability to undergo liquid-liquid phase separation (LLPS), thereby inhibiting CGAS activation.

The protein localises to the nucleus. It is found in the chromosome. Its subcellular location is the cell membrane. The protein resides in the cytoplasm. It localises to the cytosol. The enzyme catalyses GTP + ATP = 2',3'-cGAMP + 2 diphosphate. It catalyses the reaction GTP + ATP = pppGp(2'-5')A + diphosphate. The catalysed reaction is pppGp(2'-5')A = 2',3'-cGAMP + diphosphate. With respect to regulation, the enzyme activity is strongly increased by double-stranded DNA (dsDNA), but not by single-stranded DNA or RNA. DNA-binding induces the formation of liquid-like droplets in which CGAS is activated. Liquid-like droplets also create a selective environment that restricts entry of negative regulators, such as TREX1 or BANF1/BAF, allowing sensing of DNA. A number of mechanisms exist to restrict its activity toward self-DNA. The nucleotidyltransferase activity is inhibited in the nucleus via its association with nucleosomes: interacts with the acidic patch of histones H2A and H2B, thereby blocking DNA-binding and subsequent activation. CGAS is also inactive when associated with mitotic chromatin. Chromatin-bound CGAS cannot be activated by exogenous DNA in mitotic cells: phosphorylation of the N-terminal disordered part by AURKB during the G2-M transition blocks CGAS liquid phase separation and activation. Activity toward self-DNA is inhibited by BANF1/BAF upon acute loss of nuclear membrane integrity: BANF1/BAF acts by outcompeting CGAS for DNA-binding, thereby preventing CGAS activation. DNA-induced activation at micronuclei is also limited by TREX1, which degrades micronuclear DNA upon nuclear envelope rupture, thereby preventing CGAS activation. CGAS can be released from nucleosomes and activated by MRE11 component of the MRN complex, which displaces CGAS from acidic-patch-mediated sequestration. Acetylation at Lys-359, Lys-369 and Lys-389 inhibits the cyclic GMP-AMP synthase activity. Acetylation by KAT5 increases the cyclic GMP-AMP synthase activity by promoting DNA-binding and subsequent activation. Phosphorylation at Ser-278 suppresses the nucleotidyltransferase activity. Phosphorylation at Ser-410 promotes the cyclic GMP-AMP synthase activity. Phosphorylation at Ser-188 inhibits its cyclic GMP-AMP synthase activity. Ubiquitination at Lys-359 via 'Lys-27'-linked polyubiquitination enhances the cyclic GMP-AMP synthase activity. Monoubiquitination at Lys-322 promotes oligomerization and subsequent activation. Sumoylation at Lys-322, Lys-359 and Lys-369 prevents DNA-binding, oligomerization and nucleotidyltransferase activity. The enzyme activity is impaired by the cleavage by CASP1. In addition to DNA, also activated by collided ribosomes upon translation stress: specifically binds collided ribosomes, promoting its activation and triggering type-I interferon production. Its function is as follows. Nucleotidyltransferase that catalyzes the formation of cyclic GMP-AMP (2',3'-cGAMP) from ATP and GTP and plays a key role in innate immunity. Catalysis involves both the formation of a 2',5' phosphodiester linkage at the GpA step and the formation of a 3',5' phosphodiester linkage at the ApG step, producing c[G(2',5')pA(3',5')p]. Acts as a key DNA sensor: directly binds double-stranded DNA (dsDNA), inducing the formation of liquid-like droplets in which CGAS is activated, leading to synthesis of 2',3'-cGAMP, a second messenger that binds to and activates STING1, thereby triggering type-I interferon production. Preferentially binds long dsDNA (around 45 bp) and forms ladder-like networks that function cooperatively to stabilize individual cGAS-dsDNA complexes. Acts as a key foreign DNA sensor, the presence of double-stranded DNA (dsDNA) in the cytoplasm being a danger signal that triggers the immune responses. Has antiviral activity by sensing the presence of dsDNA from DNA viruses in the cytoplasm. Also acts as an innate immune sensor of infection by retroviruses by detecting the presence of reverse-transcribed DNA in the cytosol. Detection of retroviral reverse-transcribed DNA in the cytosol may be indirect and be mediated via interaction with PQBP1, which directly binds reverse-transcribed retroviral DNA. Also detects the presence of DNA from bacteria. 2',3'-cGAMP can be transferred from producing cells to neighboring cells through gap junctions, leading to promote STING1 activation and convey immune response to connecting cells. 2',3'-cGAMP can also be transferred between cells by virtue of packaging within viral particles contributing to IFN-induction in newly infected cells in a cGAS-independent but STING1-dependent manner. Also senses the presence of neutrophil extracellular traps (NETs) that are translocated to the cytosol following phagocytosis, leading to synthesis of 2',3'-cGAMP. In addition to foreign DNA, can also be activated by endogenous nuclear or mitochondrial DNA. When self-DNA leaks into the cytosol during cellular stress (such as mitochondrial stress, DNA damage, mitotic arrest or senescence), or is present in form of cytosolic micronuclei, CGAS is activated leading to a state of sterile inflammation. Acts as a regulator of cellular senescence by binding to cytosolic chromatin fragments that are present in senescent cells, leading to trigger type-I interferon production via STING1 and promote cellular senescence. Also involved in the inflammatory response to genome instability and double-stranded DNA breaks: acts by localizing to micronuclei arising from genome instability. Micronuclei, which are frequently found in cancer cells, consist of chromatin surrounded by their own nuclear membrane: following breakdown of the micronuclear envelope, a process associated with chromothripsis, CGAS binds self-DNA exposed to the cytosol, leading to 2',3'-cGAMP synthesis and subsequent activation of STING1 and type-I interferon production. In a healthy cell, CGAS is however kept inactive even in cellular events that directly expose it to self-DNA, such as mitosis, when cGAS associates with chromatin directly after nuclear envelope breakdown or remains in the form of postmitotic persistent nuclear cGAS pools bound to chromatin. Nuclear CGAS is inactivated by chromatin via direct interaction with nucleosomes, which block CGAS from DNA binding and thus prevent CGAS-induced autoimmunity. Also acts as a suppressor of DNA repair in response to DNA damage: inhibits homologous recombination repair by interacting with PARP1, the CGAS-PARP1 interaction leading to impede the formation of the PARP1-TIMELESS complex. In addition to DNA, also sense translation stress: in response to translation stress, translocates to the cytosol and associates with collided ribosomes, promoting its activation and triggering type-I interferon production. The sequence is that of Cyclic GMP-AMP synthase from Sus scrofa (Pig).